The sequence spans 342 residues: MKFIDEAKIYVKAGDGGRGCVSFRREKYVPFGGPNGGDGGKGGDVVIVATSSHNTLLDLKYKQHHVAKHGGHGEGSNRTGRSAPDLTIPVPVGTLVMDSESGEILADLVTEGQEYIVAHGGIGGRGNARFATATNQAPRYAQSGIPGEERWIRLELKLLADVGIIGLPNVGKSTFISRVSAARPKIADYPFTTLTPHLGVVRYGDDLNTFVLADIPGLIEGAHEGVGMGIQFLRHIERTALLLHIIDISRDETSTGWHDFEVINSELASYSPELILKPQIVAVNKTDLPITREKLKDTLRIFAEKGIVLYPFSAATGEGIPALLYKIGEALKNIRYRQTEHE.

An Obg domain is found at 1-159 (MKFIDEAKIY…RWIRLELKLL (159 aa)). Residues 160-332 (ADVGIIGLPN…LLYKIGEALK (173 aa)) form the OBG-type G domain. Residues 166–173 (GLPNVGKS), 191–195 (FTTLT), 214–217 (DIPG), 284–287 (NKTD), and 313–315 (SAA) contribute to the GTP site. Positions 173 and 193 each coordinate Mg(2+).

This sequence belongs to the TRAFAC class OBG-HflX-like GTPase superfamily. OBG GTPase family. In terms of assembly, monomer. Mg(2+) serves as cofactor.

It localises to the cytoplasm. In terms of biological role, an essential GTPase which binds GTP, GDP and possibly (p)ppGpp with moderate affinity, with high nucleotide exchange rates and a fairly low GTP hydrolysis rate. Plays a role in control of the cell cycle, stress response, ribosome biogenesis and in those bacteria that undergo differentiation, in morphogenesis control. This is GTPase Obg from Syntrophus aciditrophicus (strain SB).